A 128-amino-acid polypeptide reads, in one-letter code: 14 kDa zinc-binding protein (128 aa).

The HIT domain maps to 18–128 (IFDKIIKKEI…GGRQMNWPPG (111 aa)). The short motif at 112–116 (HIHVH) is the Histidine triad motif element.

In terms of assembly, homodimer.

The polypeptide is 14 kDa zinc-binding protein (ZBP14) (Zea mays (Maize)).